Consider the following 423-residue polypeptide: Osteomodulin (423 aa).

The first 20 residues, 1 to 20, serve as a signal peptide directing secretion; that stretch reads MGCLRPIYVLFFCFVVRVYG. A sulfotyrosine mark is found at Tyr22, Tyr25, Tyr31, Tyr39, Tyr51, and Tyr77. The LRRNT domain occupies 53 to 91; that stretch reads APFYQNILGCAKECFCPTNFPTSMYCDNRKLKTIPDIPM. LRR repeat units follow at residues 92-113, 116-129, 142-164, 165-184, 187-207, 213-233, 234-255, 258-279, 281-294, 301-322, and 331-353; these read HIQQ…SFIN, HLKE…KIKS, NLQQ…PKSL, ERLL…AMDG, NVTM…KGKI, KLMQ…GLPL, SLMY…YFQK, KLHA…IFNL, NLIE…KLKQ, NLEH…MMCP, and HLTY…IFFC. Asn113 and Asn121 each carry an N-linked (GlcNAc...) asparagine glycan. A glycan (N-linked (GlcNAc...) asparagine) is linked at Asn187. 2 N-linked (GlcNAc...) asparagine glycosylation sites follow: Asn242 and Asn278. Asn316 carries an N-linked (GlcNAc...) asparagine glycan. The cysteines at positions 321 and 353 are disulfide-linked. The interval 383–408 is disordered; the sequence is YQDEEEEEEDDSQDHTLEGQEETEEH. The span at 385–394 shows a compositional bias: acidic residues; that stretch reads DEEEEEEDDS. Tyr413 and Tyr414 each carry sulfotyrosine.

It belongs to the small leucine-rich proteoglycan (SLRP) family. SLRP class II subfamily. Binds the alpha(V)beta(3)-integrin. In terms of processing, glycosylated; contains keratan sulfate. As to expression, osteoblast and odontoblast. Expressed in femoral bone and calvaria tissues. Detected in femoral head, rib, tendon and bone marrow.

The protein localises to the secreted. It is found in the extracellular space. Its subcellular location is the extracellular matrix. Its function is as follows. May be implicated in biomineralization processes. Has a function in binding of osteoblasts via the alpha(V)beta(3)-integrin. The protein is Osteomodulin (Omd) of Rattus norvegicus (Rat).